A 169-amino-acid chain; its full sequence is E1B protein, small T-antigen (169 aa).

This sequence belongs to the adenoviridae E1B 19 kDa protein family.

This is E1B protein, small T-antigen from Canine adenovirus serotype 1 (strain CLL) (CAdV-1).